The chain runs to 374 residues: Chaperone protein DnaJ (374 aa).

The region spanning 4–68 (DYYDILGVSR…QMRGRYDQFG (65 aa)) is the J domain. Residues 133 to 215 (GGEQQIRISH…CGGRGQNQVS (83 aa)) form a CR-type zinc finger. Zn(2+) contacts are provided by cysteine 146, cysteine 149, cysteine 163, cysteine 166, cysteine 189, cysteine 192, cysteine 203, and cysteine 206. CXXCXGXG motif repeat units follow at residues 146-153 (CKTCEGTG), 163-170 (CSTCQGSG), 189-196 (CPTCNGQG), and 203-210 (CDSCGGRG).

Belongs to the DnaJ family. As to quaternary structure, homodimer. It depends on Zn(2+) as a cofactor.

The protein resides in the cytoplasm. Its function is as follows. Participates actively in the response to hyperosmotic and heat shock by preventing the aggregation of stress-denatured proteins and by disaggregating proteins, also in an autonomous, DnaK-independent fashion. Unfolded proteins bind initially to DnaJ; upon interaction with the DnaJ-bound protein, DnaK hydrolyzes its bound ATP, resulting in the formation of a stable complex. GrpE releases ADP from DnaK; ATP binding to DnaK triggers the release of the substrate protein, thus completing the reaction cycle. Several rounds of ATP-dependent interactions between DnaJ, DnaK and GrpE are required for fully efficient folding. Also involved, together with DnaK and GrpE, in the DNA replication of plasmids through activation of initiation proteins. The sequence is that of Chaperone protein DnaJ from Acaryochloris marina (strain MBIC 11017).